The chain runs to 63 residues: Protein sigN172 (63 aa).

This chain is Protein sigN172, found in Dictyostelium discoideum (Social amoeba).